A 697-amino-acid polypeptide reads, in one-letter code: MANKREFPLAKTRNIGIMAHIDAGKTTTTERILYYTGKIHKIGETHEGDSQMDWMDEEKERGITITSAATTAQWKDYRINIIDTPGHVDFTIEVERSLRVLDGAVTVLDAQAGVEPQTENVWRQAETYGVPRIVFVNKMDKIGADFDKSVKSLHERLNANAHAVQMPIGSADTFEGVIDLINMVADIYDEDKLGSKWDTVPIPDQYKEEAEKRRGELIEAVADVDDGIMEKYLGGEEISNDELKAAIRKATLNLEFFPVYAGSAFKNKGVQMMLDGVIDYLPSPLDVKPYVAHDPKTGDEVELMADDKKPFAALAFKIATDPFVGRLTFIRVYTGSLESGSYVLNASKNSRERVGRLLQMHANSRTEIPEVFSGDIAGAIGLKNTTTGDSLTDPDHPLILESLKVPDPVIQVSVEPKSKADRDKMDVALQKLTEEDPTFRAETNPETGQTLISGMGELHLDIMVERMRREFNVDAKIGEPQVAYRETFTKEAEAQGKFVRQSGGKGQYGDVWIDFTPNEEGKGYEFEDAIVGGVVPREFIPSVDQGLQEAMKNGVLAGYPLIDVKAKLYDGSYHEVDSSEAAFKVAASLALKNAASKAGAVILEPIMKVQVTTPEEYLGDVMGSITARRGTMEGMEDRAGAKVINSFVPLSEMFGYATTLRSSTQGRGTFTMVFDHYSPTPKSIQADIIKKRGGEAE.

The tr-type G domain occupies 10-285; that stretch reads AKTRNIGIMA…GVIDYLPSPL (276 aa). Residues 19–26, 83–87, and 137–140 each bind GTP; these read AHIDAGKT, DTPGH, and NKMD.

The protein belongs to the TRAFAC class translation factor GTPase superfamily. Classic translation factor GTPase family. EF-G/EF-2 subfamily.

Its subcellular location is the cytoplasm. Its function is as follows. Catalyzes the GTP-dependent ribosomal translocation step during translation elongation. During this step, the ribosome changes from the pre-translocational (PRE) to the post-translocational (POST) state as the newly formed A-site-bound peptidyl-tRNA and P-site-bound deacylated tRNA move to the P and E sites, respectively. Catalyzes the coordinated movement of the two tRNA molecules, the mRNA and conformational changes in the ribosome. This Lactobacillus helveticus (strain DPC 4571) protein is Elongation factor G.